Reading from the N-terminus, the 334-residue chain is Type II methyltransferase M.NlaIII (334 aa).

It belongs to the N(4)/N(6)-methyltransferase family.

It catalyses the reaction a 2'-deoxyadenosine in DNA + S-adenosyl-L-methionine = an N(6)-methyl-2'-deoxyadenosine in DNA + S-adenosyl-L-homocysteine + H(+). A methylase, recognizes the double-stranded sequence 5'-CATG-3', methylates A-2 on both strands and protects the DNA from cleavage by the NlaIII endonuclease. This is Type II methyltransferase M.NlaIII (nlaIIIM) from Neisseria lactamica.